Consider the following 647-residue polypeptide: Paraneoplastic antigen Ma6E (647 aa).

4 disordered regions span residues Gln-111 to Ala-199, Gly-227 to Gly-254, Ala-508 to Gly-580, and Arg-608 to Lys-647. Gly residues-rich tracts occupy residues Gly-122–Gly-149, Gly-158–Ala-199, and Gly-227–Arg-251. Positions Pro-517–Gly-570 are enriched in low complexity. Over residues Glu-625–Gly-636 the composition is skewed to acidic residues.

The protein is Paraneoplastic antigen Ma6E of Homo sapiens (Human).